The chain runs to 152 residues: CASP-like protein 5B1 (152 aa).

Topologically, residues 1-11 (MKKMIGSPGTM) are cytoplasmic. A helical transmembrane segment spans residues 12 to 32 (SGLILRLGQCATAAASIGVMV). At 33–42 (SSYDFSNYTA) the chain is on the extracellular side. A glycan (N-linked (GlcNAc...) asparagine) is linked at N39. A helical transmembrane segment spans residues 43-63 (FCFLVASMGLQLIWSFGLACL). Residues 64-77 (DVYAIRRKSDLRSP) lie on the Cytoplasmic side of the membrane. A helical transmembrane segment spans residues 78–98 (ILLSLFTVGDWVTALLALAAA). Residues 99–131 (CSSAGVTVLFTKDTEFCRQQPALSCDRFQISVG) lie on the Extracellular side of the membrane. The helical transmembrane segment at 132-152 (LSFFNWFLAAISSHTMFWILI) threads the bilayer.

Belongs to the Casparian strip membrane proteins (CASP) family. Homodimer and heterodimers. Expressed in leaves, exclusively in hair cells (e.g. differentiated trichomes and immature cells).

Its subcellular location is the cell membrane. The polypeptide is CASP-like protein 5B1 (Arabidopsis thaliana (Mouse-ear cress)).